We begin with the raw amino-acid sequence, 492 residues long: Catalase isozyme C (492 aa).

Arg-62 provides a ligand contact to heme. His-65 is an active-site residue. Arg-102 contributes to the heme binding site. Asn-138 is an active-site residue. Phe-151 lines the heme pocket. Tyr-210 bears the Phosphotyrosine; by STRK1 mark. Positions 325 to 348 (CPGIIVPGIYYSDDKLLQTRIFSY) form a cross-link, 3-(S-cysteinyl)-tyrosine (Cys-Tyr). Residues Arg-344, Tyr-348, and Arg-355 each coordinate heme. The Peroxisome targeting signal signature appears at 484 to 492 (SRLSAKPSM).

This sequence belongs to the catalase family. As to quaternary structure, homotetramer. Interacts with GLO1 and GLO4; these interactions are disturbed by alpha-hydroxy-2-pyridinemethanesulfonic acid (HPMS) and salicylic acid (SA). Interacts with STRK1 at the plasma membrane. The cofactor is heme. Post-translationally, activated by STRK1-mediated phosphorylation at Tyr-210 upon salt and oxidative stress. In terms of tissue distribution, highly expressed in mature leaves. Mainly expressed in leaf blades, stems, panicles, leaf sheaths, and culms, but barely in roots.

The protein localises to the peroxisome. Its subcellular location is the glyoxysome. The protein resides in the cell membrane. It carries out the reaction 2 H2O2 = O2 + 2 H2O. Strongly inhibited by beta-mercaptoethanol, sodium azide and potassium cyanide. Slightly repressed by 3-amino-1,2,4-triazole (3-AT). Activity is repressed proportionally to increased concentration of NaCl, KCl, LiCl and MgCl(2). Functionally, occurs in almost all aerobically respiring organisms and serves to protect cells from the toxic effects of hydrogen peroxide. Responsible for the redox homeostasis in leaves. Prevents nitric oxide (NO) accumulation and subsequent NO-mediated leaf cell death as well as the S-nitrosylation of specific proteins (e.g. glyceraldehyde 3-phosphate dehydrogenase and thioredoxin) by degrading H(2)O(2). Involved in photorespiration. Promotes drought stress tolerance and recovery. Involved in NO-mediated enhanced tolerance to zinc oxide nanoparticles (ZnO NPs)-induced phytotoxicity. Participates in melatonin-mediated detoxification. The chain is Catalase isozyme C from Oryza sativa subsp. japonica (Rice).